The sequence spans 393 residues: Putative bacilysin exporter BacE (393 aa).

10 consecutive transmembrane segments (helical) span residues 11-31 (LLFGQALSFMGDYCVLPALLI), 43-63 (SGVIAVRSIPMVFQPFLGVLV), 69-89 (VKIMLWTDVIRGVIFLGLTFL), 92-112 (GEYPLLFLALLFVSYGSGVFF), 133-155 (LFAKATTISIIVGAAAGGLFLLG), 160-177 (LAVAFNGVTYLVSAFFIS), 215-235 (MFTMITMALLWGVVYSYFPIV), 244-264 (IGNFLLTFCIGFGGFIGAALV), 287-307 (ALFLFTPIFAVSVIAAILFFI), and 353-373 (IVDAAVIMAFIVLLVSGLFLH).

It belongs to the major facilitator superfamily.

The protein localises to the cell membrane. In terms of biological role, part of the bacilysin biosynthesis operon. May be involved in self-resistance to bacilysin by permitting efflux of this antibiotic. This is Putative bacilysin exporter BacE (bacE) from Bacillus amyloliquefaciens (Bacillus velezensis).